The sequence spans 339 residues: Diguanylate cyclase VdcA (339 aa).

A GGDEF domain is found at 206–339 (QQVSLIMLDI…NLGRNRVMPL (134 aa)). Asp214 contributes to the Mg(2+) binding site. Asn222 and Asp231 together coordinate substrate. Residue Glu257 participates in Mg(2+) binding. Glu257 (proton acceptor) is an active-site residue.

Requires Mg(2+) as cofactor.

It carries out the reaction 2 GTP = 3',3'-c-di-GMP + 2 diphosphate. Its pathway is purine metabolism; 3',5'-cyclic di-GMP biosynthesis. Functionally, diguanylate cyclase (DGC) that catalyzes the synthesis of cyclic diguanylate (c-di-GMP) via the condensation of 2 GTP molecules. Is involved in the modulation of intracellular c-di-GMP levels. Cyclic-di-GMP is a second messenger which positively regulates biofilm formation and negatively regulates virulence in V.cholerae, and is proposed to play an important role in the transition from persistence in the environment to survival in the host. Overexpression of vdcA results in increased biofilm formation, and reduced motility and virulence. This is Diguanylate cyclase VdcA (vdcA) from Vibrio cholerae serotype O1 (strain ATCC 39315 / El Tor Inaba N16961).